Here is a 335-residue protein sequence, read N- to C-terminus: Phosphatidate cytidylyltransferase, mitochondrial (335 aa).

The protein belongs to the TAM41 family. Mg(2+) is required as a cofactor.

It localises to the mitochondrion inner membrane. It carries out the reaction a 1,2-diacyl-sn-glycero-3-phosphate + CTP + H(+) = a CDP-1,2-diacyl-sn-glycerol + diphosphate. Its pathway is phospholipid metabolism; CDP-diacylglycerol biosynthesis; CDP-diacylglycerol from sn-glycerol 3-phosphate: step 3/3. In terms of biological role, catalyzes the conversion of phosphatidic acid (PA) to CDP-diacylglycerol (CDP-DAG), an essential intermediate in the synthesis of phosphatidylglycerol, cardiolipin and phosphatidylinositol. This chain is Phosphatidate cytidylyltransferase, mitochondrial (TAMM41), found in Bos taurus (Bovine).